We begin with the raw amino-acid sequence, 321 residues long: Biotin synthase (321 aa).

The 230-residue stretch at 44 to 273 folds into the Radical SAM core domain; it reads FCGNVFDLCT…DGFVRIAAGR (230 aa). The [4Fe-4S] cluster site is built by cysteine 62, cysteine 66, and cysteine 69. [2Fe-2S] cluster-binding residues include serine 106, cysteine 138, cysteine 198, and arginine 268.

It belongs to the radical SAM superfamily. Biotin synthase family. In terms of assembly, homodimer. [4Fe-4S] cluster is required as a cofactor. [2Fe-2S] cluster serves as cofactor.

It catalyses the reaction (4R,5S)-dethiobiotin + (sulfur carrier)-SH + 2 reduced [2Fe-2S]-[ferredoxin] + 2 S-adenosyl-L-methionine = (sulfur carrier)-H + biotin + 2 5'-deoxyadenosine + 2 L-methionine + 2 oxidized [2Fe-2S]-[ferredoxin]. It participates in cofactor biosynthesis; biotin biosynthesis; biotin from 7,8-diaminononanoate: step 2/2. Functionally, catalyzes the conversion of dethiobiotin (DTB) to biotin by the insertion of a sulfur atom into dethiobiotin via a radical-based mechanism. The polypeptide is Biotin synthase (Akkermansia muciniphila (strain ATCC BAA-835 / DSM 22959 / JCM 33894 / BCRC 81048 / CCUG 64013 / CIP 107961 / Muc)).